The chain runs to 339 residues: Glycerol-3-phosphate dehydrogenase [NAD(P)+] (339 aa).

NADPH-binding residues include Ser-15, Tyr-16, His-36, and Lys-110. Sn-glycerol 3-phosphate contacts are provided by Lys-110, Gly-139, and Thr-141. NADPH is bound at residue Ala-143. The sn-glycerol 3-phosphate site is built by Lys-195, Asp-248, Ser-258, Arg-259, and Asn-260. Lys-195 functions as the Proton acceptor in the catalytic mechanism. Residue Arg-259 participates in NADPH binding. NADPH-binding residues include Val-283 and Glu-285.

It belongs to the NAD-dependent glycerol-3-phosphate dehydrogenase family.

It is found in the cytoplasm. The enzyme catalyses sn-glycerol 3-phosphate + NAD(+) = dihydroxyacetone phosphate + NADH + H(+). The catalysed reaction is sn-glycerol 3-phosphate + NADP(+) = dihydroxyacetone phosphate + NADPH + H(+). The protein operates within membrane lipid metabolism; glycerophospholipid metabolism. Functionally, catalyzes the reduction of the glycolytic intermediate dihydroxyacetone phosphate (DHAP) to sn-glycerol 3-phosphate (G3P), the key precursor for phospholipid synthesis. This chain is Glycerol-3-phosphate dehydrogenase [NAD(P)+], found in Cronobacter sakazakii (strain ATCC BAA-894) (Enterobacter sakazakii).